A 214-amino-acid polypeptide reads, in one-letter code: 3-isopropylmalate dehydratase small subunit (214 aa).

Belongs to the LeuD family. LeuD type 1 subfamily. In terms of assembly, heterodimer of LeuC and LeuD.

It catalyses the reaction (2R,3S)-3-isopropylmalate = (2S)-2-isopropylmalate. It participates in amino-acid biosynthesis; L-leucine biosynthesis; L-leucine from 3-methyl-2-oxobutanoate: step 2/4. Catalyzes the isomerization between 2-isopropylmalate and 3-isopropylmalate, via the formation of 2-isopropylmaleate. The polypeptide is 3-isopropylmalate dehydratase small subunit (Methylobacillus flagellatus (strain ATCC 51484 / DSM 6875 / VKM B-1610 / KT)).